The primary structure comprises 493 residues: Cytochrome P450 monooxygenase astA (493 aa).

A helical membrane pass occupies residues 5–25; the sequence is EIILLGLAALAVTYQVIVWIY. Residues Asn-174 and Asn-286 are each glycosylated (N-linked (GlcNAc...) asparagine). Residue Cys-433 participates in heme binding.

It belongs to the cytochrome P450 family. Heme serves as cofactor.

The protein resides in the membrane. It catalyses the reaction asperterpenoid A + reduced [NADPH--hemoprotein reductase] + O2 = asperterpenoid C + oxidized [NADPH--hemoprotein reductase] + H2O + H(+). Its pathway is secondary metabolite biosynthesis; terpenoid biosynthesis. Its function is as follows. Cytochrome P450 monooxygenase; part of the gene cluster that mediates the biosynthesis of the asperterpenoids, sesterterpenes that exhibit anti-tuberculosis activity. The first step of the pathway is performed by the sesterterpene synthase astC that possesses both prenyl transferase and terpene cyclase activity, converting isopentenyl diphosphate and dimethylallyl diphosphate into geranylfarnesyl diphosphate (GFPP) and further converting GFPP into preasperterpenoid A, respectively. The cytochrome P450 monooxygenase astB then dually oxidizes preasperterpenoid A to produce asperterpenoid A along with a minor product, asperterpenoid B. Finally, the cytochrome P450 monooxygenase astA converts asperterpenoid A into asperterpenoid C. The polypeptide is Cytochrome P450 monooxygenase astA (Talaromyces wortmannii (Penicillium wortmannii)).